The sequence spans 632 residues: Biosynthetic arginine decarboxylase (632 aa).

Position 101 is an N6-(pyridoxal phosphate)lysine (Lys101). 281–291 (FDVGGGLGVDY) is a substrate binding site.

Belongs to the Orn/Lys/Arg decarboxylase class-II family. SpeA subfamily. It depends on Mg(2+) as a cofactor. Requires pyridoxal 5'-phosphate as cofactor.

It catalyses the reaction L-arginine + H(+) = agmatine + CO2. It participates in amine and polyamine biosynthesis; agmatine biosynthesis; agmatine from L-arginine: step 1/1. In terms of biological role, catalyzes the biosynthesis of agmatine from arginine. This is Biosynthetic arginine decarboxylase from Klebsiella pneumoniae (strain 342).